The primary structure comprises 322 residues: Hydroxypyruvate reductase (322 aa).

NAD(+) is bound by residues Arg-160 to Ile-161, Asp-180, Cys-211 to Pro-212, Asn-238 to Arg-240, and Asp-264. Arg-240 is a catalytic residue. The active site involves Glu-269. Catalysis depends on His-288, which acts as the Proton donor.

Belongs to the D-isomer specific 2-hydroxyacid dehydrogenase family.

It carries out the reaction (R)-glycerate + NAD(+) = 3-hydroxypyruvate + NADH + H(+). Its pathway is carbohydrate metabolism. Involved in catabolism of D-apiose. Catalyzes the reduction of 3-hydroxypyruvate to glycerate. This chain is Hydroxypyruvate reductase, found in Blautia hydrogenotrophica (strain DSM 10507 / JCM 14656 / S5a33) (Ruminococcus hydrogenotrophicus).